Here is a 313-residue protein sequence, read N- to C-terminus: Solute carrier family 35 member E3 (313 aa).

9 helical membrane passes run 17–37 (GLLF…WIYV), 40–60 (GFPN…GLYI), 77–97 (LLLL…SLQN), 126–143 (FSTR…GVIL), 153–173 (FLGM…QVWV), 187–206 (LLYY…VPFF), 225–245 (LMVL…YWII), 252–272 (TYNM…YVLF), and 275–295 (PLSI…LAYT).

This sequence belongs to the TPT transporter family. SLC35E subfamily.

The protein resides in the membrane. In terms of biological role, putative transporter. This Homo sapiens (Human) protein is Solute carrier family 35 member E3 (SLC35E3).